A 213-amino-acid polypeptide reads, in one-letter code: Kynurenine formamidase (213 aa).

W18 lines the substrate pocket. H48, H52, and D54 together coordinate Zn(2+). H58 acts as the Proton donor/acceptor in catalysis. Positions 160 and 172 each coordinate Zn(2+).

The protein belongs to the Cyclase 1 superfamily. KynB family. Homodimer. It depends on Zn(2+) as a cofactor.

The catalysed reaction is N-formyl-L-kynurenine + H2O = L-kynurenine + formate + H(+). It participates in amino-acid degradation; L-tryptophan degradation via kynurenine pathway; L-kynurenine from L-tryptophan: step 2/2. Functionally, catalyzes the hydrolysis of N-formyl-L-kynurenine to L-kynurenine, the second step in the kynurenine pathway of tryptophan degradation. This is Kynurenine formamidase from Burkholderia vietnamiensis (strain G4 / LMG 22486) (Burkholderia cepacia (strain R1808)).